Reading from the N-terminus, the 1024-residue chain is Multidrug resistance protein MdtC (1024 aa).

12 helical membrane-spanning segments follow: residues 12-32, 333-353, 360-380, 387-407, 435-455, 469-489, 528-548, 853-873, 875-895, 897-917, 953-973, and 984-1004; these read VATT…FSLL, EVER…FIFL, LIPA…MYLC, LSLM…IVVL, VLSM…MAGL, VAIG…CAWL, WVMV…ISIP, LWLI…LYES, VHPL…LLAL, LFDA…IGIV, PIIM…LSSG, and ITIV…TPVI.

This sequence belongs to the resistance-nodulation-cell division (RND) (TC 2.A.6) family. MdtC subfamily. As to quaternary structure, part of a tripartite efflux system composed of MdtA, MdtB and MdtC. MdtC forms a heteromultimer with MdtB.

The protein resides in the cell inner membrane. The sequence is that of Multidrug resistance protein MdtC from Yersinia pestis bv. Antiqua (strain Antiqua).